We begin with the raw amino-acid sequence, 258 residues long: Type III pantothenate kinase (258 aa).

ATP is bound at residue 6 to 13; sequence DVGNTNTV. Residues tyrosine 100 and 107–110 contribute to the substrate site; that span reads GADR. Aspartate 109 (proton acceptor) is an active-site residue. Residue aspartate 129 participates in K(+) binding. ATP is bound at residue threonine 132. Residue threonine 184 coordinates substrate.

This sequence belongs to the type III pantothenate kinase family. As to quaternary structure, homodimer. It depends on NH4(+) as a cofactor. K(+) serves as cofactor.

The protein localises to the cytoplasm. It carries out the reaction (R)-pantothenate + ATP = (R)-4'-phosphopantothenate + ADP + H(+). Its pathway is cofactor biosynthesis; coenzyme A biosynthesis; CoA from (R)-pantothenate: step 1/5. In terms of biological role, catalyzes the phosphorylation of pantothenate (Pan), the first step in CoA biosynthesis. The protein is Type III pantothenate kinase of Geobacillus kaustophilus (strain HTA426).